Consider the following 508-residue polypeptide: Ribonuclease Y (508 aa).

Positions 198-264 constitute a KH domain; the sequence is TVSVINLPND…RLTIEKLITD (67 aa). The HD domain maps to 324–417; that stretch reads VLTHSIEVAK…VQAADAVSAS (94 aa).

The protein belongs to the RNase Y family.

Endoribonuclease that initiates mRNA decay. This is Ribonuclease Y from Fusobacterium nucleatum subsp. nucleatum (strain ATCC 25586 / DSM 15643 / BCRC 10681 / CIP 101130 / JCM 8532 / KCTC 2640 / LMG 13131 / VPI 4355).